Here is a 205-residue protein sequence, read N- to C-terminus: MEFLWAPLLGLCCSLAAADRHIVFWNSSNPKFREEDYTVHVQLNDYLDIICPHYEDDSVADAAMERYTLYMVEHQEYVTCEPQSKDQVRWKCNQPSAKHGPEKLSEKFQRFTPFTLGKEFKEGHSYYYISKPIYHQETQCLKLKVTVNGKITHSPHAHANPQEKRLQADDPEVQVLHSIGHSAAPRLFPLVWAVLLLPLLLLQTQ.

Residues 1–17 (MEFLWAPLLGLCCSLAA) form the signal peptide. Residues 18–151 (ADRHIVFWNS…KLKVTVNGKI (134 aa)) form the Ephrin RBD domain. The N-linked (GlcNAc...) asparagine glycan is linked to Asn26. Cystine bridges form between Cys51–Cys92 and Cys80–Cys140. Ser182 carries GPI-anchor amidated serine lipidation. A propeptide spans 183 to 205 (AAPRLFPLVWAVLLLPLLLLQTQ) (removed in mature form).

The protein belongs to the ephrin family. As to quaternary structure, monomer. Homodimer. Forms heterodimers with EPHA2. Binds to the receptor tyrosine kinases EPHA2, EPHA3, EPHA4, EPHA5, EPHA6 and EPHA7. Also binds with low affinity to EPHA1. Undergoes proteolysis by a metalloprotease to give rise to a soluble monomeric form. Post-translationally, N-Glycosylation is required for binding to EPHA2 receptor and inducing its internalization.

It is found in the cell membrane. The protein resides in the secreted. Cell surface GPI-bound ligand for Eph receptors, a family of receptor tyrosine kinases which are crucial for migration, repulsion and adhesion during neuronal, vascular and epithelial development. Binds promiscuously Eph receptors residing on adjacent cells, leading to contact-dependent bidirectional signaling into neighboring cells. Plays an important role in angiogenesis and tumor neovascularization. The recruitment of VAV2, VAV3 and PI3-kinase p85 subunit by phosphorylated EPHA2 is critical for EFNA1-induced RAC1 GTPase activation and vascular endothelial cell migration and assembly. Exerts anti-oncogenic effects in tumor cells through activation and down-regulation of EPHA2. Activates EPHA2 by inducing tyrosine phosphorylation which leads to its internalization and degradation. Acts as a negative regulator in the tumorigenesis of gliomas by down-regulating EPHA2 and FAK. Can evoke collapse of embryonic neuronal growth cone and regulates dendritic spine morphogenesis. This Rattus norvegicus (Rat) protein is Ephrin-A1 (Efna1).